We begin with the raw amino-acid sequence, 103 residues long: Small ribosomal subunit protein uS14c (103 aa).

The disordered stretch occupies residues 34–56 (KVSPLSLSEKTKMQEKLQSLPRN).

This sequence belongs to the universal ribosomal protein uS14 family. In terms of assembly, part of the 30S ribosomal subunit.

It is found in the plastid. Its subcellular location is the chloroplast. Functionally, binds 16S rRNA, required for the assembly of 30S particles. This Saccharum hybrid (Sugarcane) protein is Small ribosomal subunit protein uS14c.